The sequence spans 23 residues: Alyteserin-1b (23 aa).

Asparagine amide is present on asparagine 23.

Expressed by the skin glands.

Its subcellular location is the secreted. The protein localises to the target cell membrane. Antibacterial peptide with amphipathic alpha-helical structure. Shows selective growth inhibitory activity against the Gram-negative bacteria E.coli (MIC=25 uM). Has a weak hemolytic activity against human erythrocytes (LC(50)=200 uM). Is not active against S.aureus (MIC=200 uM). The sequence is that of Alyteserin-1b from Alytes obstetricans (Common midwife toad).